Here is a 121-residue protein sequence, read N- to C-terminus: Cell division protein FtsB (121 aa).

Residues 1 to 6 (MRNWRW) lie on the Cytoplasmic side of the membrane. A helical membrane pass occupies residues 7 to 24 (LLLVLAVLLAWLQYRFWF). The Periplasmic segment spans residues 25–121 (GPGNSGEVMM…PEPVDPVDHP (97 aa)). Positions 31–66 (EVMMLEAQVAHQTQDNEGLRQRNQALAAEVKDLKDG) form a coiled coil. The interval 98–121 (APASAEASAPAQQAPEPVDPVDHP) is disordered. A compositionally biased stretch (low complexity) spans 99 to 113 (PASAEASAPAQQAPE).

This sequence belongs to the FtsB family. In terms of assembly, part of a complex composed of FtsB, FtsL and FtsQ.

It localises to the cell inner membrane. Functionally, essential cell division protein. May link together the upstream cell division proteins, which are predominantly cytoplasmic, with the downstream cell division proteins, which are predominantly periplasmic. The sequence is that of Cell division protein FtsB from Xanthomonas axonopodis pv. citri (strain 306).